Consider the following 451-residue polypeptide: Tubulin alpha chain (451 aa).

An MREC motif motif is present at residues methionine 1–cysteine 4. Residue glutamine 11 coordinates GTP. Lysine 40 bears the N6-acetyllysine mark. The GTP site is built by glutamate 71, serine 140, glycine 144, threonine 145, threonine 179, asparagine 206, and asparagine 228. Mg(2+) is bound at residue glutamate 71. Glutamate 254 is an active-site residue. The disordered stretch occupies residues tyrosine 432–tyrosine 451. Glutamate 445 carries the post-translational modification 5-glutamyl polyglutamate.

Belongs to the tubulin family. As to quaternary structure, dimer of alpha and beta chains. A typical microtubule is a hollow water-filled tube with an outer diameter of 25 nm and an inner diameter of 15 nM. Alpha-beta heterodimers associate head-to-tail to form protofilaments running lengthwise along the microtubule wall with the beta-tubulin subunit facing the microtubule plus end conferring a structural polarity. Microtubules usually have 13 protofilaments but different protofilament numbers can be found in some organisms and specialized cells. It depends on Mg(2+) as a cofactor. In terms of processing, some glutamate residues at the C-terminus are polyglycylated, resulting in polyglycine chains on the gamma-carboxyl group. Glycylation is mainly limited to tubulin incorporated into axonemes (cilia and flagella) whereas glutamylation is prevalent in neuronal cells, centrioles, axonemes, and the mitotic spindle. Both modifications can coexist on the same protein on adjacent residues, and lowering polyglycylation levels increases polyglutamylation, and reciprocally. The precise function of polyglycylation is still unclear. Post-translationally, some glutamate residues at the C-terminus are polyglutamylated, resulting in polyglutamate chains on the gamma-carboxyl group. Polyglutamylation plays a key role in microtubule severing by spastin (SPAST). SPAST preferentially recognizes and acts on microtubules decorated with short polyglutamate tails: severing activity by SPAST increases as the number of glutamates per tubulin rises from one to eight, but decreases beyond this glutamylation threshold. Acetylation of alpha chains at Lys-40 is located inside the microtubule lumen. This modification has been correlated with increased microtubule stability, intracellular transport and ciliary assembly. In terms of processing, undergoes a tyrosination/detyrosination cycle, the cyclic removal and re-addition of a C-terminal tyrosine residue by the enzymes tubulin tyrosine carboxypeptidase (MATCAP, VASH1 or VASH2) and tubulin tyrosine ligase (TTL), respectively. Post-translationally, tyrosination promotes microtubule interaction with CAP-Gly microtubule plus-end tracking proteins. Tyrosinated tubulins regulate the initiation of dynein-driven motility. Detyrosination is involved in metaphase plate congression by guiding chromosomes during mitosis. Detyrosination increases microtubules-dependent mechanotransduction in dystrophic cardiac and skeletal muscle. In cardiomyocytes, detyrosinated microtubules are required to resist to contractile compression during contraction.

The protein resides in the cytoplasm. Its subcellular location is the cytoskeleton. It carries out the reaction GTP + H2O = GDP + phosphate + H(+). In terms of biological role, tubulin is the major constituent of microtubules, a cylinder consisting of laterally associated linear protofilaments composed of alpha- and beta-tubulin heterodimers. Microtubules grow by the addition of GTP-tubulin dimers to the microtubule end, where a stabilizing cap forms. Below the cap, tubulin dimers are in GDP-bound state, owing to GTPase activity of alpha-tubulin. This chain is Tubulin alpha chain, found in Torpedo marmorata (Marbled electric ray).